The chain runs to 513 residues: E3 ubiquitin-protein ligase XBAT33 (513 aa).

ANK repeat units lie at residues 44–73, 77–106, 111–140, 171–200, and 214–244; these read GLNS…DVNS, CGQT…NVTR, AGRT…PSDK, GGIT…NVSA, and AGST…KMTL. The segment at 312–362 adopts an RING-type zinc-finger fold; it reads CAVCLERTCTVAAEGCEHQLCVRCALYLCSSSNVPSVTVGPPGSIPCPLCR. Disordered stretches follow at residues 397-417 and 455-483; these read DTTD…SKTR and HGTE…EEGQ. Basic and acidic residues-rich tracts occupy residues 455-466 and 474-483; these read HGTERHSEEHVE and TEQEKIEEGQ.

It carries out the reaction S-ubiquitinyl-[E2 ubiquitin-conjugating enzyme]-L-cysteine + [acceptor protein]-L-lysine = [E2 ubiquitin-conjugating enzyme]-L-cysteine + N(6)-ubiquitinyl-[acceptor protein]-L-lysine.. Its pathway is protein modification; protein ubiquitination. Possesses E3 ubiquitin-protein ligase activity when associated with the E2 enzyme UBC8 in vitro. The polypeptide is E3 ubiquitin-protein ligase XBAT33 (XBAT33) (Arabidopsis thaliana (Mouse-ear cress)).